We begin with the raw amino-acid sequence, 210 residues long: Somatotropin (210 aa).

An N-terminal signal peptide occupies residues 1–22 (MAKALVLLSLVLVSVFVNNGTA). His38 lines the Zn(2+) pocket. Cys71 and Cys183 are oxidised to a cystine. Glu192 contacts Zn(2+). Cysteines 200 and 208 form a disulfide.

It belongs to the somatotropin/prolactin family.

It localises to the secreted. Its function is as follows. Growth hormone plays an important role in growth control and is involved in the regulation of several anabolic processes. Implicated as an osmoregulatory substance important for seawater adaptation. This chain is Somatotropin (gh), found in Misgurnus mizolepis (Chinese weatherloach).